The sequence spans 436 residues: MATTQLEYARQGIITDKMKEAALAEGVSPEFIREGIAAGTIIICHNIKHGNGRPLAVGKGLRTKVNANIGTSADDTDITKELEKARVAVRHGADAIMDLSTGGPVDEIRRAIIAETNACIGSVPLYQAALDAVRTKKKAIVDMTVDDIFEGIIKHAEDGVDFITVHCGVTRSTVERMKNEGRLMDVVSRGGAFTVEWMAYNNCENPLFEHFDRLLEITKAYDMTLSLGDGFRPGCLADATDRAQIHELIILGELTQRAQAAGVQVMIEGPGHVPLNQIEANILLQKRLCHGAPFYVLGPLVTDIAPGYDHITCAIGGAIAASAGADFLCYVTPSEHLRLPSVEDVREGVIASRIAAHAADIAKGVKGAMEKDIAMAKCRKKLDWEGQFNLSLDPEKAQRLRAESGVAEHGACTMCGEFCAYKVMDDAMEKQRAAGH.

Substrate is bound by residues asparagine 68, methionine 97, tyrosine 126, histidine 166, 188–190 (SRG), 229–232 (DGFR), and glutamate 268. Histidine 272 contributes to the Zn(2+) binding site. Tyrosine 295 is a substrate binding site. Histidine 336 contacts Zn(2+). [4Fe-4S] cluster contacts are provided by cysteine 412, cysteine 415, and cysteine 419.

It belongs to the ThiC family. Homodimer. The cofactor is [4Fe-4S] cluster.

It carries out the reaction 5-amino-1-(5-phospho-beta-D-ribosyl)imidazole + S-adenosyl-L-methionine = 4-amino-2-methyl-5-(phosphooxymethyl)pyrimidine + CO + 5'-deoxyadenosine + formate + L-methionine + 3 H(+). The protein operates within cofactor biosynthesis; thiamine diphosphate biosynthesis. Functionally, catalyzes the synthesis of the hydroxymethylpyrimidine phosphate (HMP-P) moiety of thiamine from aminoimidazole ribotide (AIR) in a radical S-adenosyl-L-methionine (SAM)-dependent reaction. This is Phosphomethylpyrimidine synthase from Geobacter metallireducens (strain ATCC 53774 / DSM 7210 / GS-15).